A 368-amino-acid polypeptide reads, in one-letter code: 1-deoxy-D-xylulose 5-phosphate reductoisomerase (368 aa).

6 residues coordinate NADPH: threonine 10, glycine 11, serine 12, isoleucine 13, glutamine 38, and asparagine 100. Lysine 101 serves as a coordination point for 1-deoxy-D-xylulose 5-phosphate. Glutamate 102 is a binding site for NADPH. Residue aspartate 125 participates in Mn(2+) binding. 1-deoxy-D-xylulose 5-phosphate contacts are provided by serine 126, glutamate 127, serine 151, and histidine 172. Glutamate 127 lines the Mn(2+) pocket. NADPH is bound at residue glycine 178. 1-deoxy-D-xylulose 5-phosphate contacts are provided by serine 185, asparagine 190, lysine 191, and glutamate 194. Glutamate 194 lines the Mn(2+) pocket.

This sequence belongs to the DXR family. It depends on Mg(2+) as a cofactor. The cofactor is Mn(2+).

It catalyses the reaction 2-C-methyl-D-erythritol 4-phosphate + NADP(+) = 1-deoxy-D-xylulose 5-phosphate + NADPH + H(+). Its pathway is isoprenoid biosynthesis; isopentenyl diphosphate biosynthesis via DXP pathway; isopentenyl diphosphate from 1-deoxy-D-xylulose 5-phosphate: step 1/6. In terms of biological role, catalyzes the NADPH-dependent rearrangement and reduction of 1-deoxy-D-xylulose-5-phosphate (DXP) to 2-C-methyl-D-erythritol 4-phosphate (MEP). The sequence is that of 1-deoxy-D-xylulose 5-phosphate reductoisomerase from Tropheryma whipplei (strain TW08/27) (Whipple's bacillus).